We begin with the raw amino-acid sequence, 115 residues long: Large ribosomal subunit protein uL22 (115 aa).

This sequence belongs to the universal ribosomal protein uL22 family. Part of the 50S ribosomal subunit.

In terms of biological role, this protein binds specifically to 23S rRNA; its binding is stimulated by other ribosomal proteins, e.g. L4, L17, and L20. It is important during the early stages of 50S assembly. It makes multiple contacts with different domains of the 23S rRNA in the assembled 50S subunit and ribosome. The globular domain of the protein is located near the polypeptide exit tunnel on the outside of the subunit, while an extended beta-hairpin is found that lines the wall of the exit tunnel in the center of the 70S ribosome. The protein is Large ribosomal subunit protein uL22 of Streptomyces avermitilis (strain ATCC 31267 / DSM 46492 / JCM 5070 / NBRC 14893 / NCIMB 12804 / NRRL 8165 / MA-4680).